We begin with the raw amino-acid sequence, 435 residues long: Serine--tRNA ligase (435 aa).

242–244 provides a ligand contact to L-serine; sequence TAE. 273–275 lines the ATP pocket; sequence RSE. An L-serine-binding site is contributed by glutamate 296. Position 360–363 (360–363) interacts with ATP; it reads EISS. Position 396 (serine 396) interacts with L-serine.

Belongs to the class-II aminoacyl-tRNA synthetase family. Type-1 seryl-tRNA synthetase subfamily. In terms of assembly, homodimer. The tRNA molecule binds across the dimer.

It localises to the cytoplasm. It carries out the reaction tRNA(Ser) + L-serine + ATP = L-seryl-tRNA(Ser) + AMP + diphosphate + H(+). The catalysed reaction is tRNA(Sec) + L-serine + ATP = L-seryl-tRNA(Sec) + AMP + diphosphate + H(+). It functions in the pathway aminoacyl-tRNA biosynthesis; selenocysteinyl-tRNA(Sec) biosynthesis; L-seryl-tRNA(Sec) from L-serine and tRNA(Sec): step 1/1. Its function is as follows. Catalyzes the attachment of serine to tRNA(Ser). Is also able to aminoacylate tRNA(Sec) with serine, to form the misacylated tRNA L-seryl-tRNA(Sec), which will be further converted into selenocysteinyl-tRNA(Sec). The polypeptide is Serine--tRNA ligase (Vibrio parahaemolyticus serotype O3:K6 (strain RIMD 2210633)).